The primary structure comprises 499 residues: Glycerol kinase (499 aa).

ADP is bound at residue Thr13. ATP contacts are provided by Thr13, Thr14, and Ser15. Residue Thr13 coordinates sn-glycerol 3-phosphate. Arg17 lines the ADP pocket. Arg83, Glu84, Tyr135, and Asp245 together coordinate sn-glycerol 3-phosphate. The glycerol site is built by Arg83, Glu84, Tyr135, Asp245, and Gln246. Thr267 and Gly310 together coordinate ADP. The ATP site is built by Thr267, Gly310, Gln314, and Gly411. ADP is bound by residues Gly411 and Asn415.

It belongs to the FGGY kinase family. As to quaternary structure, homotetramer and homodimer (in equilibrium).

It catalyses the reaction glycerol + ATP = sn-glycerol 3-phosphate + ADP + H(+). It participates in polyol metabolism; glycerol degradation via glycerol kinase pathway; sn-glycerol 3-phosphate from glycerol: step 1/1. With respect to regulation, activated by phosphorylation and inhibited by fructose 1,6-bisphosphate (FBP). Functionally, key enzyme in the regulation of glycerol uptake and metabolism. Catalyzes the phosphorylation of glycerol to yield sn-glycerol 3-phosphate. This chain is Glycerol kinase, found in Halothermothrix orenii (strain H 168 / OCM 544 / DSM 9562).